Here is a 452-residue protein sequence, read N- to C-terminus: THO complex subunit 5A (452 aa).

Belongs to the THOC5 family. Component of the THO complex, which is composed of THO1, THO2, THO3, THO5, THO6 and THO7.

The protein resides in the nucleus. Functionally, acts as a component of the THO subcomplex of the TREX complex which is thought to couple mRNA transcription, processing and nuclear export. The polypeptide is THO complex subunit 5A (THO5A) (Arabidopsis thaliana (Mouse-ear cress)).